We begin with the raw amino-acid sequence, 52 residues long: Protein YabQ (52 aa).

Identified as a multicopy suppressor of the slow growth phenotype of an rsgA (yjeQ) deletion mutant. The chain is Protein YabQ (yabQ) from Escherichia coli (strain K12).